A 536-amino-acid polypeptide reads, in one-letter code: Membrane protein insertase YidC (536 aa).

Residues 7–27 (IIAVVLSLFVLIGWSYLSEFM) traverse the membrane as a helical segment. A disordered region spans residues 43–70 (VQQKASEPVAQPVQTASAPAASSFAPTE). Residues 58 to 68 (ASAPAASSFAP) are compositionally biased toward low complexity. Transmembrane regions (helical) follow at residues 346 to 366 (GNYGVAIIILTILVKLLFWPL), 415 to 435 (GGCLPMLLQIPVFLGLYQGLL), and 495 to 515 (IMMFMPVVFTFMFLNFPAGLV).

The protein belongs to the OXA1/ALB3/YidC family. Type 1 subfamily. In terms of assembly, interacts with the Sec translocase complex via SecD. Specifically interacts with transmembrane segments of nascent integral membrane proteins during membrane integration.

Its subcellular location is the cell inner membrane. Functionally, required for the insertion and/or proper folding and/or complex formation of integral membrane proteins into the membrane. Involved in integration of membrane proteins that insert both dependently and independently of the Sec translocase complex, as well as at least some lipoproteins. Aids folding of multispanning membrane proteins. This is Membrane protein insertase YidC from Oleidesulfovibrio alaskensis (strain ATCC BAA-1058 / DSM 17464 / G20) (Desulfovibrio alaskensis).